Here is a 95-residue protein sequence, read N- to C-terminus: DNA-directed RNA polymerase subunit Rpo11 (95 aa).

The protein belongs to the archaeal Rpo11/eukaryotic RPB11/RPC19 RNA polymerase subunit family. As to quaternary structure, part of the RNA polymerase complex.

It is found in the cytoplasm. The catalysed reaction is RNA(n) + a ribonucleoside 5'-triphosphate = RNA(n+1) + diphosphate. Functionally, DNA-dependent RNA polymerase (RNAP) catalyzes the transcription of DNA into RNA using the four ribonucleoside triphosphates as substrates. In Pyrococcus horikoshii (strain ATCC 700860 / DSM 12428 / JCM 9974 / NBRC 100139 / OT-3), this protein is DNA-directed RNA polymerase subunit Rpo11.